Consider the following 887-residue polypeptide: MMSDEKNLGVSQKLVSPSRSTSSCSSKQGSRQDSWEVVEGLRGEMNYTQEPPVQKGFLLKKRKWPLKGWHKRFFYLDKGILKYAKSQTDIEREKLHGCIDVGLSVMSVKKSSKCIDLDTEEHIYHLKVKSEEVFDEWVSKLRHHRMYRQNEIAMFPHEVNHFFSGSTITDSSSGVFDSISSRKRSSISKQNLFQTGSNVSFSCGGETRVPLWLQSSEDMEKCSKDLAHCHAYLVEMSQLLQSMDVLHRTYSAPAINAIQGGSFESPKKEKRSHRRWRSRAIGKDAKGTLQVPKPFSGPVRLHSSNPNLSTLDFGEEKNYSDGSETSSEFSKMQEDLCHIAHKVYFTLRSAFNIMSAEREKLKQLMEQDASSSPSAQVIGLKNALSSALAQNTDLKERLRRIHAESLLLDSPAVAKSGDNLAEENSRDENRALVHQLSNESRLSITDSLSEFFDAQEVLLSPSSSENEISDDDSYVSDISDNLSLDNLSNDLDNERQTLGPVLDSGREAKSRRRTCLPAPCPSSSNISLWNILRNNIGKDLSKVAMPVELNEPLNTLQRLCEELEYSELLDKAAQIPSPLERMVYVAAFAISAYASSYYRAGSKPFNPVLGETYECIREDKGFQFFSEQVSHHPPISACHAESRNFVFWQDVRWKNKFWGKSMEIVPIGTTHVTLPVFGDHFEWNKVTSCIHNILSGQRWIEHYGEIVIKNLHDDSCYCKVNFIKAKYWSTNAHEIEGTVFDRSGKAVHRLFGKWHESIYCGGGSSSACVWRANPMPKGYEQYYSFTQFALELNEMDPSSKSLLPPTDTRFRPDQRFLEEGNLEEAEIQKQRIEQLQRERRRVLEENHVEHQPRFFRKSDDDSWVSNGTYLELRKDLGFSKLDHPVLW.

Residues 1 to 35 (MMSDEKNLGVSQKLVSPSRSTSSCSSKQGSRQDSW) form a disordered region. Phosphoserine occurs at positions 16 and 34. Positions 16 to 32 (SPSRSTSSCSSKQGSRQ) are enriched in low complexity. The region spanning 51-146 (PPVQKGFLLK…WVSKLRHHRM (96 aa)) is the PH domain. An FFAT 1 motif is present at residues 161–167 (HFFSGST). 3 positions are modified to phosphoserine: Ser-200, Ser-251, and Ser-265. The segment at 261–326 (GSFESPKKEK…KNYSDGSETS (66 aa)) is disordered. Over residues 268–280 (KEKRSHRRWRSRA) the composition is skewed to basic residues. Phosphoserine occurs at positions 304, 309, 320, 323, 371, 372, 410, 425, 437, and 440. The FFAT 2 motif lies at 450 to 454 (EFFDA).

Belongs to the OSBP family. In terms of assembly, homodimer. Interacts with RRAS. Interacts (phosphorylated form) with VAPA. Interacts with OSBPL6. In terms of processing, phosphorylation is enhanced in vitro by phorbol-12-myristate-13-acetate (PMA), forskolin and calcium ionophore A23187. Phosphorylation seems to be stimulated in conditions of low cell-cell (or cell-matrix) adhesion. As to expression, expressed in a subset of small lymphocytes (at protein level). Expressed at high concentration in kidney, lymph node and thymus. Expressed at moderate concentration in stomach, jejunum, ileum, appendix, spleen, leukocytes, trachea, lung and thyroid gland. Expressed at low concentration in whole brain, esophagus, duodenum, ileocecum, colon, skeletal muscle, bone marrow, placenta and mammary gland. Isoform 1a, isoform 1b, isoform 1c and isoform 1d are highly expressed in brain, bone marrow, colon, kidney, lung, skeletal muscle, spleen, thymus and thyroid. Not expressed in heart and liver. Isoform 2a, isoform 2b, isoform 2c and isoform 2d are expressed in brain, bone marrow, kidney, skeletal muscle, spleen, thymus and thyroid. Not expressed in heart, liver and lung.

It localises to the endoplasmic reticulum membrane. Its subcellular location is the cytoplasm. The protein localises to the cytosol. It is found in the cell membrane. The protein resides in the cell projection. It localises to the filopodium tip. Its subcellular location is the nucleus membrane. Functionally, phosphoinositide-binding protein which associates with both cell and endoplasmic reticulum (ER) membranes. Can bind to the ER membrane protein VAPA and recruit VAPA to plasma membrane sites, thus linking these intracellular compartments. The ORP3-VAPA complex stimulates RRAS signaling which in turn attenuates integrin beta-1 (ITGB1) activation at the cell surface. With VAPA, may regulate ER morphology. Has a role in regulation of the actin cytoskeleton, cell polarity and cell adhesion. Binds to phosphoinositides with preference for PI(3,4)P2 and PI(3,4,5)P3. Also binds 25-hydroxycholesterol and cholesterol. The protein is Oxysterol-binding protein-related protein 3 (OSBPL3) of Homo sapiens (Human).